A 131-amino-acid chain; its full sequence is Peptide methionine sulfoxide reductase MsrB (131 aa).

Residues 8 to 130 (LDEWRSMLDP…NSVCIDLRPR (123 aa)) enclose the MsrB domain. Cys47, Cys50, Cys96, and Cys99 together coordinate Zn(2+). Catalysis depends on Cys119, which acts as the Nucleophile.

Belongs to the MsrB Met sulfoxide reductase family. Zn(2+) serves as cofactor.

The catalysed reaction is L-methionyl-[protein] + [thioredoxin]-disulfide + H2O = L-methionyl-(R)-S-oxide-[protein] + [thioredoxin]-dithiol. This is Peptide methionine sulfoxide reductase MsrB from Pseudomonas putida (strain ATCC 47054 / DSM 6125 / CFBP 8728 / NCIMB 11950 / KT2440).